The sequence spans 374 residues: 2,7-anhydro-N-acetylneuraminate hydratase (374 aa).

11 residues coordinate NAD(+): tyrosine 13, phenylalanine 14, aspartate 35, asparagine 38, threonine 70, asparagine 72, histidine 75, glutamate 92, lysine 93, tryptophan 162, and lysine 163.

The protein belongs to the Gfo/Idh/MocA family. Homodimer. NAD(+) serves as cofactor.

It carries out the reaction N-acetyl-2,7-anhydro-alpha-neuraminate + H2O = N-acetyl-alpha-neuraminate. Neu5Ac is produced in the presence of NAD(+) or NADH, but not in the presence of FAD. Hydratase involved in the degradation of sialic acids, which are present in the host mucus layer and represent a much-coveted source of nutrients for R.gnavus, a prevalent member of the normal gut microbiota. Catalyzes the reversible conversion of the dehydrated form of N-acetylneuraminate (Neu5Ac), 2,7-anhydro-N-acetylneuraminate (2,7-AN), to Neu5Ac, allowing growth on 2,7-AN produced by the IT-sialidase NanH. Acts through a multistep mechanism involving a keto intermediate and cycling of NADH/NAD(+). In Mediterraneibacter gnavus (strain ATCC 29149 / DSM 114966 / JCM 6515 / VPI C7-9) (Ruminococcus gnavus), this protein is 2,7-anhydro-N-acetylneuraminate hydratase.